The chain runs to 384 residues: Chaperone protein DnaJ (384 aa).

In terms of domain architecture, J spans Asp4–Gly68. Disordered stretches follow at residues Arg29–Lys60 and Glu73–Leu131. The span at Glu42–Lys60 shows a compositional bias: basic and acidic residues. Residues Gly80–Gly101 are compositionally biased toward gly residues. Positions Phe102–Phe111 are enriched in low complexity. Residues Phe112–Gly121 show a composition bias toward gly residues. Residues Gly145–Asp227 form a CR-type zinc finger. The Zn(2+) site is built by Cys158, Cys161, Cys175, and Cys178. CXXCXGXG motif repeat units lie at residues Cys158–Gly165, Cys175–Gly182, Cys201–Gly208, and Cys215–Gly222. Residues Asp160–Pro191 are disordered. A compositionally biased stretch (low complexity) spans Gly180–Thr190. The Zn(2+) site is built by Cys201, Cys204, Cys215, and Cys218.

Belongs to the DnaJ family. As to quaternary structure, homodimer. Zn(2+) serves as cofactor.

The protein localises to the cytoplasm. Participates actively in the response to hyperosmotic and heat shock by preventing the aggregation of stress-denatured proteins and by disaggregating proteins, also in an autonomous, DnaK-independent fashion. Unfolded proteins bind initially to DnaJ; upon interaction with the DnaJ-bound protein, DnaK hydrolyzes its bound ATP, resulting in the formation of a stable complex. GrpE releases ADP from DnaK; ATP binding to DnaK triggers the release of the substrate protein, thus completing the reaction cycle. Several rounds of ATP-dependent interactions between DnaJ, DnaK and GrpE are required for fully efficient folding. Also involved, together with DnaK and GrpE, in the DNA replication of plasmids through activation of initiation proteins. The polypeptide is Chaperone protein DnaJ (Haloarcula marismortui (strain ATCC 43049 / DSM 3752 / JCM 8966 / VKM B-1809) (Halobacterium marismortui)).